A 542-amino-acid polypeptide reads, in one-letter code: Calcium-dependent protein kinase 15 (542 aa).

Positions 1–73 (MGARASRHRQ…QAPQQAAAED (73 aa)) are disordered. The N-myristoyl glycine moiety is linked to residue Gly2. Residues 12-21 (PDQSQSQSPS) show a composition bias toward low complexity. Residues 22–40 (PHHKHHHHHQTTRAPKPKP) are compositionally biased toward basic residues. Pro residues predominate over residues 41-60 (KPQPPPPQQPRSQPPPPPRH). A compositionally biased stretch (low complexity) spans 61 to 71 (QPQQAPQQAAA). The 259-residue stretch at 90–348 (YTFGRELGRG…AAEILNHPWI (259 aa)) folds into the Protein kinase domain. ATP contacts are provided by residues 96–104 (LGRGQFGVT) and Lys119. Asp214 functions as the Proton acceptor in the catalytic mechanism. Positions 354-384 (APDKPLDITVISRMKQFRAMNKLKKVALKVV) are autoinhibitory domain. EF-hand domains follow at residues 391–426 (EEIVGLKEMFKSLDTDNSGTITLEELRAGLPKLGTK), 427–462 (ISESELRQLMEAADVDGNGSIDYVEFISATMHMNRL), 463–497 (EKEDHIYKAFEYFDKDHSGFITVDELEEALTKYDM), and 498–533 (GDEATIKEIIAEVDTDHDGRINYQEFVAMMKNNSPE). Residues Asp404, Asp406, Ser408, Thr410, Glu415, Asp440, Asp442, Asn444, Ser446, Glu451, Asp476, Asp478, Ser480, Glu487, Asp511, Asp513, Asp515, Arg517, and Glu522 each coordinate Ca(2+).

Belongs to the protein kinase superfamily. Ser/Thr protein kinase family. CDPK subfamily.

Its subcellular location is the membrane. The enzyme catalyses L-seryl-[protein] + ATP = O-phospho-L-seryl-[protein] + ADP + H(+). It carries out the reaction L-threonyl-[protein] + ATP = O-phospho-L-threonyl-[protein] + ADP + H(+). With respect to regulation, activated by calcium. Autophosphorylation may play an important role in the regulation of the kinase activity. Its function is as follows. May play a role in signal transduction pathways that involve calcium as a second messenger. The chain is Calcium-dependent protein kinase 15 from Oryza sativa subsp. japonica (Rice).